Reading from the N-terminus, the 300-residue chain is UPF0761 membrane protein PSHAa0171 (300 aa).

6 helical membrane passes run 47–67 (LLSLVPLIAVGVAIFSAFPGF), 100–120 (NANQMTAVGIGFLAAIALLLI), 143–163 (FAVYWMVLSLGPVFLGGSIAV), 181–201 (FSGFLLKLLPYGISMVGFIML), 215–235 (AIPGALFAAMLFELTKKGFAL), and 249–269 (AVATIPILFVWIYLSWIVVLL).

It belongs to the UPF0761 family.

The protein localises to the cell inner membrane. The protein is UPF0761 membrane protein PSHAa0171 of Pseudoalteromonas translucida (strain TAC 125).